Here is a 553-residue protein sequence, read N- to C-terminus: MPHFNPVPVSNKKFVFDDFILNMDGSLLRSEKKVNIPPKEYAVLVILLEAAGEIVSKNTLLDQVWGDAEVNEESLTRCIYALRRILSEDKEHRYIETLYGQGYRFNRPVVVVSPPAPQPTTHTLAILPFQMQDQVQSESLHYSIVKGLSQYAPFGLSVLPVTITKNCRSVKDILELMDQLRPDYYISGQMIPDGNDNIVQIEIVRVKGYHLLHQESIKLIEHQPASLLQNKIANLLLRCIPGLRWDTKQISELNSIDSTMVYLRGKHELNQYTPYSLQQALKLLTQCVNMSPNSIAPYCALAECYLSMAQMGIFDKQNAMIKAKEHAIKATELDHNNPQALGLLGLINTIHSEYIVGSLLFKQANLLSPISADIKYYYGWNLFMAGQLEEALQTINECLKLDPTRAAAGITKLWITYYHTGIDDAIRLGDELRSQHLQDNPILLSMQVMFLSLKGKHELARKLTKEISTQEITGLIAVNLLYAEYCQNSERALPTIREFLESEQRIDNNPGLLPLVLVAHGEAIAEKMWNKFKNEDNIWFKRWKQDPRLIKLR.

The ompR/PhoB-type DNA-binding region spans 11–107 (NKKFVFDDFI…LYGQGYRFNR (97 aa)). Asp-62 is subject to 4-aspartylphosphate. Residues 372 to 405 (ADIKYYYGWNLFMAGQLEEALQTINECLKLDPTR) form a TPR repeat.

Its function is as follows. The main transcriptional regulator of the Salmonella pathogenicity island 1 (SPI1) gene expression. Activates the expression of invasion genes by a direct action at their promoters and also indirectly by increasing the level of InvF. Also binds upstream of prgH and directly activates the expression of prgHIJK operon. The polypeptide is Transcriptional regulator HilA (hilA) (Salmonella typhimurium (strain LT2 / SGSC1412 / ATCC 700720)).